A 249-amino-acid chain; its full sequence is Large ribosomal subunit protein uL30A (249 aa).

Belongs to the universal ribosomal protein uL30 family. In terms of assembly, component of the small ribosomal subunit (SSU). Mature yeast ribosomes consist of a small (40S) and a large (60S) subunit. The 40S small subunit contains 1 molecule of ribosomal RNA (18S rRNA) and at least 33 different proteins. The large 60S subunit contains 3 rRNA molecules (25S, 5.8S and 5S rRNA) and at least 46 different proteins.

The protein resides in the cytoplasm. Its subcellular location is the nucleus. The protein localises to the nucleolus. Its function is as follows. Component of the ribosome, a large ribonucleoprotein complex responsible for the synthesis of proteins in the cell. The small ribosomal subunit (SSU) binds messenger RNAs (mRNAs) and translates the encoded message by selecting cognate aminoacyl-transfer RNA (tRNA) molecules. The large subunit (LSU) contains the ribosomal catalytic site termed the peptidyl transferase center (PTC), which catalyzes the formation of peptide bonds, thereby polymerizing the amino acids delivered by tRNAs into a polypeptide chain. The nascent polypeptides leave the ribosome through a tunnel in the LSU and interact with protein factors that function in enzymatic processing, targeting, and the membrane insertion of nascent chains at the exit of the ribosomal tunnel. The polypeptide is Large ribosomal subunit protein uL30A (rlp7) (Schizosaccharomyces pombe (strain 972 / ATCC 24843) (Fission yeast)).